The sequence spans 22 residues: Large ribosomal subunit protein bL32 (22 aa).

Positions 1-22 (CVQQNKKSRSARDMXXSXDALE) are disordered. The span at 13-22 (DMXXSXDALE) shows a compositional bias: low complexity.

This sequence belongs to the bacterial ribosomal protein bL32 family.

This chain is Large ribosomal subunit protein bL32 (rpmF), found in Ectopseudomonas mendocina (Pseudomonas mendocina).